We begin with the raw amino-acid sequence, 310 residues long: B3 domain-containing transcription factor NGA1 (310 aa).

The disordered stretch occupies residues 1-26 (MMTDLSLTRDEDEEEAKPLAEEEGAR). A compositionally biased stretch (basic and acidic residues) spans 16–26 (AKPLAEEEGAR). The TF-B3 DNA-binding region spans 35–141 (FDKVVTPSDV…RLFIDWRRRP (107 aa)). The segment covering 251-268 (ESGMTNSTEEESSSSGGS) has biased composition (low complexity). Positions 251 to 310 (ESGMTNSTEEESSSSGGSLPRGGGGGASSSSFFQLRLGSSSEDDHFTKKGKSSLSFDLDQ) are disordered.

In terms of assembly, interacts with BRX. Interacts with BZIP30.

It is found in the nucleus. Functionally, regulates lateral organ growth. Functionally redundant with NGA2, NGA3 and NGA4. This Arabidopsis thaliana (Mouse-ear cress) protein is B3 domain-containing transcription factor NGA1 (NGA1).